The sequence spans 716 residues: Tensin-4 (716 aa).

The signal sequence occupies residues Met-1 to Gly-17. 4 disordered regions span residues Leu-119–Leu-274, Gln-301–Pro-322, Val-334–Thr-366, and Gly-379–Gln-436. The span at Lys-138–Tyr-150 shows a compositional bias: basic and acidic residues. A compositionally biased stretch (polar residues) spans Ser-197–Ser-206. Residues Pro-214–Ser-228 are compositionally biased toward pro residues. Position 248 is a phosphoserine (Ser-248). Residues Pro-265–Leu-274 show a composition bias toward polar residues. The segment covering Ala-402–Leu-419 has biased composition (polar residues). The SH2 domain occupies Trp-449–Gln-556. Residues Cys-583–Arg-704 enclose the PTB domain.

The protein belongs to the PTEN phosphatase protein family. In terms of assembly, interacts (via SH2 domain) with Rho GTPase-activating protein DLC1 (via C-terminus); the interaction is independent of DLC1 tyrosine phosphorylation. Interacts with integrin ITGB1; the interaction displaces tensin TNS3 from the ITGB1 cytoplasmic tail and promotes ITGB1 stability. Interacts (via SH2 domain) with E3 ubiquitin-protein ligase CBL (phosphorylated on 'Tyr-782'); the interaction is enhanced in the presence of EGF and reduces interaction of CBL with EGFR. Interacts (via SH2 domain) with receptor tyrosine kinase MET (when phosphorylated); the interaction increases MET protein stability.

Its subcellular location is the cell junction. The protein resides in the focal adhesion. It is found in the cytoplasm. The protein localises to the cytoskeleton. Promotes EGF-induced cell migration by displacing tensin TNS3 from the cytoplasmic tail of integrin ITGB1 which results in dissociation of TNS3 from focal adhesions, disassembly of actin stress fibers and initiation of cell migration. Suppresses ligand-induced degradation of EGFR by reducing EGFR ubiquitination in the presence of EGF. Increases MET protein stability by inhibiting MET endocytosis and subsequent lysosomal degradation which leads to increased cell survival, proliferation and migration. The protein is Tensin-4 (TNS4) of Bos taurus (Bovine).